The following is a 112-amino-acid chain: Large ribosomal subunit protein bL17 (112 aa).

This sequence belongs to the bacterial ribosomal protein bL17 family. In terms of assembly, part of the 50S ribosomal subunit. Contacts protein L32.

This chain is Large ribosomal subunit protein bL17, found in Moorella thermoacetica (strain ATCC 39073 / JCM 9320).